A 495-amino-acid polypeptide reads, in one-letter code: Monoamine oxidase N (495 aa).

Residues 1 to 19 (MTSRDGYQWTPETGLTQGV) are compositionally biased toward polar residues. The tract at residues 1 to 23 (MTSRDGYQWTPETGLTQGVPSLG) is disordered. The Microbody targeting signal signature appears at 493-495 (ARL).

It belongs to the flavin monoamine oxidase family. It depends on FAD as a cofactor.

The protein localises to the peroxisome. The catalysed reaction is a secondary aliphatic amine + O2 + H2O = a primary amine + an aldehyde + H2O2. The polypeptide is Monoamine oxidase N (maoN) (Aspergillus niger).